The chain runs to 223 residues: Probable tRNA-splicing endonuclease subunit tsp-1 (223 aa).

Positions 1–55 are disordered; that stretch reads MESGSTPPTDKQIRENEQDGTGHQGKLLARPTSTRQQQQQQQQQPSHSVSQSVSQ. Residues 30–55 show a composition bias toward low complexity; the sequence is RPTSTRQQQQQQQQQPSHSVSQSVSQ.

Belongs to the SEN15 family. As to quaternary structure, tRNA splicing endonuclease is a heterotetramer composed of tsp-2/sen2, tsp-1/sen15, tsp-4/sen34 and tsp-5/sen54. Interacts directly with tsp-4/sen34.

In terms of biological role, non-catalytic subunit of the tRNA-splicing endonuclease complex, a complex responsible for identification and cleavage of the splice sites in pre-tRNA. It cleaves pre-tRNA at the 5' and 3' splice sites to release the intron. The products are an intron and two tRNA half-molecules bearing 2',3' cyclic phosphate and 5'-OH termini. There are no conserved sequences at the splice sites, but the intron is invariably located at the same site in the gene, placing the splice sites an invariant distance from the constant structural features of the tRNA body. The protein is Probable tRNA-splicing endonuclease subunit tsp-1 (tsp-1) of Neurospora crassa (strain ATCC 24698 / 74-OR23-1A / CBS 708.71 / DSM 1257 / FGSC 987).